A 538-amino-acid chain; its full sequence is Lipid scramblase CLPTM1L (538 aa).

Residues 1-9 (MFPKTSFTS) are Cytoplasmic-facing. A helical transmembrane segment spans residues 10-30 (LIVGVFLLYVLHTCWVMYGIV). Over 31-284 (YTKPCEKRRA…IKGIFVDTNL (254 aa)) the chain is Extracellular. 2 N-linked (GlcNAc...) asparagine glycosylation sites follow: Asn90 and Asn100. The disordered stretch occupies residues 140–166 (ISLITGQDEPEKPDQQKQSSDSELDRP). Asn229 carries an N-linked (GlcNAc...) asparagine glycan. Residues 285–305 (YFLALTFFVAAFHLLFDFLAF) traverse the membrane as a helical segment. The Cytoplasmic segment spans residues 306 to 324 (KNDISFWKHKKSMVGMSSK). The chain crosses the membrane as a helical span at residues 325 to 341 (AVLWRCFSTIVIFLYLL). At 342 to 402 (DEQTSLLVLV…TEEYDTLAMK (61 aa)) the chain is on the extracellular side. Residues 403 to 423 (YLSYLLYPLCVGGAVYALVFV) traverse the membrane as a helical segment. The Cytoplasmic segment spans residues 424-428 (KYKSW). The helical transmembrane segment at 429 to 449 (YSWIINSLVNGVYAFGFLFML) threads the bilayer. At 450-538 (PQLFVNYKLK…EKPKGKSHED (89 aa)) the chain is on the extracellular side.

The protein belongs to the CLPTM1 family.

It localises to the endoplasmic reticulum membrane. The enzyme catalyses a 6-(alpha-D-glucosaminyl)-1-(1,2-diacyl-sn-glycero-3-phospho)-1D-myo-inositol(in) = a 6-(alpha-D-glucosaminyl)-1-(1,2-diacyl-sn-glycero-3-phospho)-1D-myo-inositol(out). The catalysed reaction is 6-(alpha-D-glucosaminyl)-(1-octadecanoyl,2-(9Z)-octadecenoyl-sn-glycero-3-phospho)-1D-myo-inositol(in) = 6-(alpha-D-glucosaminyl)-(1-octadecanoyl,2-(9Z)-octadecenoyl-sn-glycero-3-phospho)-1D-myo-inositol(out). It catalyses the reaction a 1,2-diacyl-sn-glycero-3-phospho-(1D-myo-inositol)(in) = a 1,2-diacyl-sn-glycero-3-phospho-(1D-myo-inositol)(out). It carries out the reaction a 1,2-diacyl-sn-glycero-3-phosphocholine(in) = a 1,2-diacyl-sn-glycero-3-phosphocholine(out). The enzyme catalyses a 1,2-diacyl-sn-glycero-3-phosphoethanolamine(in) = a 1,2-diacyl-sn-glycero-3-phosphoethanolamine(out). Scramblase that mediates the translocation of glucosaminylphosphatidylinositol (alpha-D-GlcN-(1-6)-(1,2-diacyl-sn-glycero-3-phospho)-1D-myo-inositol, GlcN-PI) across the endoplasmic reticulum (ER) membrane, from the cytosolic leaflet to the luminal leaflet of the ER membrane, where it participates in the biosynthesis of glycosylphosphatidylinositol (GPI). GPI is a lipid glycoconjugate involved in post-translational modification of proteins. Can also translocate 1,2-diacyl-sn-glycero-3-phospho-(1D-myo-inositol) (phosphatidylinositol or PI), as well as several other phospholipids (1,2-diacyl-sn-glycero-3-phosphocholine, 1,2-diacyl-sn-glycero-3-phosphoethanolamine), and N-acetylglucosaminylphosphatidylinositol (GlcNAc-PI) in vitro. The protein is Lipid scramblase CLPTM1L (clptm1l) of Danio rerio (Zebrafish).